The primary structure comprises 541 residues: Paromamine 6'-oxidase (541 aa).

The disordered stretch occupies residues 1-29 (MKRLRGTLPSDARHAWHPEPLGPAHRDGW). Histidine 470 acts as the Proton acceptor in catalysis.

The protein belongs to the GMC oxidoreductase family. FAD is required as a cofactor.

It carries out the reaction 6'''-deamino-6'''-hydroxyneomycin C + O2 = 6'''-deamino-6'''-oxoneomycin C + H2O2. It catalyses the reaction paromamine + O2 = 6'-oxoparomamine + H2O2. It functions in the pathway antibiotic biosynthesis; neomycin biosynthesis. Glucosaminyl-6'-oxidase involved in the biosynthetic pathway of neomycin by mediating FAD-dependent dehydrogenation of paromamine to 6'-dehydro-6'-oxoparomamine. Works in combination with neamine transaminase to replace the 6-hydroxy group of paromamine with an amino group. Also able to collaborate with neomycin C transaminase to replace the 6'''-hydroxy group of 6'''-hydroxyneomycin C with an amino group. The polypeptide is Paromamine 6'-oxidase (neoG) (Streptomyces fradiae (Streptomyces roseoflavus)).